We begin with the raw amino-acid sequence, 299 residues long: uncharacterized protein (299 aa).

The 59-residue stretch at 1 to 59 (MDKIHAMQLFIKVAELESFSRAADFFALPKGSVSRQIQALEHQLGTQLLQRTTRRVKLT) folds into the HTH lysR-type domain. Positions 19–38 (FSRAADFFALPKGSVSRQIQ) form a DNA-binding region, H-T-H motif.

This sequence belongs to the LysR transcriptional regulatory family.

This is an uncharacterized protein from Escherichia coli (strain K12).